A 345-amino-acid chain; its full sequence is Uroporphyrinogen decarboxylase (345 aa).

Residues 27–31 (RQAGR), Phe-46, Asp-76, Tyr-152, Ser-207, and His-321 contribute to the substrate site.

The protein belongs to the uroporphyrinogen decarboxylase family. As to quaternary structure, homodimer.

It is found in the cytoplasm. The catalysed reaction is uroporphyrinogen III + 4 H(+) = coproporphyrinogen III + 4 CO2. It participates in porphyrin-containing compound metabolism; protoporphyrin-IX biosynthesis; coproporphyrinogen-III from 5-aminolevulinate: step 4/4. Its function is as follows. Catalyzes the decarboxylation of four acetate groups of uroporphyrinogen-III to yield coproporphyrinogen-III. This Staphylococcus aureus (strain bovine RF122 / ET3-1) protein is Uroporphyrinogen decarboxylase.